Consider the following 447-residue polypeptide: MIKIYDTMSRDLREFVPIEDGKIKMYVCGPTVYNYIHVGNARSTVAFDTIRRYFEYRGYKVAYISNFTDVDDKIINRAREEGITPQEVADKYIAAFREDVTALGVKPATRHPRVVEFMADIIRFVEDLIEKGFAYESQGDVYFRVEKSHNYAKLANKTLEDLELGASGRTDEETARKENPVDFALWKSSKPGEISWDSPWGPGRPGWHIECSVMSTEILGDTIDIHGGGADLEFPHHTNEIAQSEAKTGKAFANYWMHNGFVNIDNVKMSKSLGNFITVHDALKTLDGQVLRFFFATQHYRKPINFTEKAVRDAETNLKYLKNTYEQPFTGNVDAQELQNFKDKFVAAMDEDFNAANGITVVFEMAKWINSGNYDASVKQALADMLEIFGIVFVEEVLDAEIEDLIQKRQEARANRDFATADQIRDQLVTQGIKLLDTKDGVRWTRD.

Cys-28 is a binding site for Zn(2+). The 'HIGH' region motif lies at 30 to 40; sequence PTVYNYIHVGN. Residues Cys-211, His-236, and Glu-240 each coordinate Zn(2+). Positions 268-272 match the 'KMSKS' region motif; that stretch reads KMSKS. Lys-271 serves as a coordination point for ATP.

The protein belongs to the class-I aminoacyl-tRNA synthetase family. In terms of assembly, monomer. It depends on Zn(2+) as a cofactor.

Its subcellular location is the cytoplasm. The catalysed reaction is tRNA(Cys) + L-cysteine + ATP = L-cysteinyl-tRNA(Cys) + AMP + diphosphate. This chain is Cysteine--tRNA ligase, found in Streptococcus pneumoniae serotype 4 (strain ATCC BAA-334 / TIGR4).